Here is a 217-residue protein sequence, read N- to C-terminus: Ribonuclease T (217 aa).

An Exonuclease domain is found at 20-195 (VVVDVETAGF…YDTEKTAELF (176 aa)). Positions 23, 25, 182, and 187 each coordinate Mg(2+). The Proton donor/acceptor role is filled by His182.

Belongs to the RNase T family. In terms of assembly, homodimer. It depends on Mg(2+) as a cofactor.

Trims short 3' overhangs of a variety of RNA species, leaving a one or two nucleotide 3' overhang. Responsible for the end-turnover of tRNA: specifically removes the terminal AMP residue from uncharged tRNA (tRNA-C-C-A). Also appears to be involved in tRNA biosynthesis. The chain is Ribonuclease T from Vibrio vulnificus (strain YJ016).